The primary structure comprises 942 residues: DNA mismatch repair protein MSH2 (942 aa).

667-674 (GPNMGGKS) is a binding site for ATP.

Belongs to the DNA mismatch repair MutS family. As to quaternary structure, heterodimer of MSH2 and MSH6 (GTBP).

It is found in the nucleus. Functionally, involved in postreplication mismatch repair. Binds specifically to DNA containing mismatched nucleotides thus providing a target for the excision repair processes characteristic of postreplication mismatch repair. This chain is DNA mismatch repair protein MSH2 (MUS1), found in Zea mays (Maize).